Consider the following 45-residue polypeptide: C-phycocyanin beta subunit (45 aa).

It belongs to the phycobiliprotein family. As to quaternary structure, heterodimer of an alpha and a beta subunit. The hererodimer further assembles into trimers and the trimers into hexamers. Post-translationally, contains two covalently linked bilin chromophores.

The protein localises to the cellular thylakoid membrane. Functionally, light-harvesting photosynthetic bile pigment-protein from the phycobiliprotein complex (phycobilisome, PBS). Phycocyanin is the major phycobiliprotein in the PBS rod. The sequence is that of C-phycocyanin beta subunit (cpcB) from Limnospira fusiformis (Arthrospira fusiformis).